The sequence spans 502 residues: ATP synthase subunit alpha (502 aa).

169 to 176 provides a ligand contact to ATP; it reads GDRQVGKT.

It belongs to the ATPase alpha/beta chains family. As to quaternary structure, F-type ATPases have 2 components, CF(1) - the catalytic core - and CF(0) - the membrane proton channel. CF(1) has five subunits: alpha(3), beta(3), gamma(1), delta(1), epsilon(1). CF(0) has three main subunits: a(1), b(2) and c(9-12). The alpha and beta chains form an alternating ring which encloses part of the gamma chain. CF(1) is attached to CF(0) by a central stalk formed by the gamma and epsilon chains, while a peripheral stalk is formed by the delta and b chains.

It is found in the cell membrane. It carries out the reaction ATP + H2O + 4 H(+)(in) = ADP + phosphate + 5 H(+)(out). In terms of biological role, produces ATP from ADP in the presence of a proton gradient across the membrane. The alpha chain is a regulatory subunit. The polypeptide is ATP synthase subunit alpha (Lysinibacillus sphaericus (strain C3-41)).